The primary structure comprises 498 residues: GPI mannosyltransferase 4 (498 aa).

The helical transmembrane segment at 11 to 31 (FYLLTIVFRFVFTLSDSYIHP) threads the bilayer. A glycan (N-linked (GlcNAc...) asparagine) is linked at asparagine 47. The helical transmembrane segment at 63 to 83 (SLAPLYFIYGPLLYFIKFFKL) threads the bilayer. Asparagine 84 is a glycosylation site (N-linked (GlcNAc...) asparagine). Transmembrane regions (helical) follow at residues 96-116 (LQISILSWIITDFCLYWMLPS), 140-160 (LFSNSIETLLLLVTILLIDDL), 189-209 (LGIFNRITFPAFLILPGWFVM), 222-242 (LVMGFFSTTALLILVDTILFG), 247-267 (VVAEPFNVSSYIIAPLNNLLY), 282-302 (YYTHILVNMPQILGPGLIFFV), 310-330 (TPFLTVISGLLFLSVIPHQEL), 332-348 (FLIPLLPLACCSFDFTL), and 350-370 (WVQPWMLYTWYIFNIFMSILM). Residues asparagine 408 and asparagine 473 are each glycosylated (N-linked (GlcNAc...) asparagine).

The protein belongs to the glycosyltransferase 22 family. PIGZ subfamily.

Its subcellular location is the endoplasmic reticulum membrane. It participates in glycolipid biosynthesis; glycosylphosphatidylinositol-anchor biosynthesis. Alpha-1,2-mannosyltransferase involved in glycosylphosphatidylinositol-anchor biosynthesis. Transfers a fourth mannose to trimannosyl-GPIs during GPI precursor assembly. The presence of a fourth mannose in GPI is essential in fungi. In Candida albicans (strain SC5314 / ATCC MYA-2876) (Yeast), this protein is GPI mannosyltransferase 4 (SMP3).